The following is a 1541-amino-acid chain: WD repeat-containing protein 62 (1541 aa).

At alanine 2 the chain carries N-acetylalanine. Serine 33 is subject to Phosphoserine. Residue threonine 46 is modified to Phosphothreonine. WD repeat units follow at residues 109-150, 153-194, 196-234, 291-330, 357-396, 402-450, 490-529, 532-574, 578-618, 626-665, 671-713, and 714-752; these read TARK…QVAE, GHKY…VVAS, KVSC…EAKV, INLK…YLAN, AVYP…KVGK, FHSS…DSHW, DMKA…ELVR, AHDA…SLEQ, DHSS…DGLH, AEKT…QKKC, GDEG…KMFG, and HSEI…TNCM. At serine 501 the chain carries Phosphoserine. 2 disordered regions span residues 762–820 and 911–1050; these read REQP…KESL and LSQS…LPQT. Over residues 770-780 the composition is skewed to basic and acidic residues; sequence KDGKWSRDPRQ. The segment covering 781–795 has biased composition (polar residues); the sequence is ETCTSMPSEISLSPG. A compositionally biased stretch (acidic residues) spans 797 to 809; sequence QTEDELEEECEPE. Residues 803 to 846 form a WD 13 repeat; that stretch reads EEECEPEELLKTPSKESLDSDPRCLLTNGKLPLWAKRLLGDDDV. Positions 810 to 820 are enriched in basic and acidic residues; the sequence is ELLKTPSKESL. Residues 937-948 are compositionally biased toward low complexity; that stretch reads VSELLCSLESEV. A Phosphoserine modification is found at serine 943. The segment covering 1008 to 1026 has biased composition (pro residues); it reads PPRPDPDPPFDVAVPPAPG. The residue at position 1050 (threonine 1050) is a Phosphothreonine. Residues serine 1095, serine 1125, and serine 1151 each carry the phosphoserine modification. Disordered regions lie at residues 1133 to 1153 and 1185 to 1212; these read LAGS…TSPG and SSSS…QGVH. One copy of the WD 14 repeat lies at 1138 to 1180; the sequence is PRAEPLRAGTGYTSPGRTNVLSAGKAEEPLEAWSPLTSCLTGL. A compositionally biased stretch (pro residues) spans 1193–1202; sequence DKTPPTPTAL. A phosphoserine mark is found at serine 1235, serine 1255, and serine 1256. The tract at residues 1273–1293 is disordered; it reads TVTPSSDSEGQEPALPSRGNH. Position 1275 is a phosphothreonine (threonine 1275).

In terms of assembly, can form homodimers (via C-terminus). Interacts (via C-terminus) with MAPKBP1 (via C-terminus). Interacts with CDK5RAP2, CEP152, CEP63 and KIAA0753. CEP63, CDK5RAP2, CEP152, WDR62 are proposed to form a stepwise assembled complex at the centrosome forming a ring near parental centrioles.

It is found in the nucleus. The protein resides in the cytoplasm. Its subcellular location is the cytoskeleton. The protein localises to the spindle pole. It localises to the microtubule organizing center. It is found in the centrosome. The protein resides in the centriole. In terms of biological role, required for cerebral cortical development. Plays a role in neuronal proliferation and migration. Plays a role in mother-centriole-dependent centriole duplication; the function seems also to involve CEP152, CDK5RAP2 and CEP63 through a stepwise assembled complex at the centrosome that recruits CDK2 required for centriole duplication. The sequence is that of WD repeat-containing protein 62 (WDR62) from Sus scrofa (Pig).